A 125-amino-acid chain; its full sequence is ATP synthase epsilon chain (125 aa).

It belongs to the ATPase epsilon chain family. F-type ATPases have 2 components, CF(1) - the catalytic core - and CF(0) - the membrane proton channel. CF(1) has five subunits: alpha(3), beta(3), gamma(1), delta(1), epsilon(1). CF(0) has three main subunits: a, b and c.

It is found in the cell inner membrane. Functionally, produces ATP from ADP in the presence of a proton gradient across the membrane. This is ATP synthase epsilon chain from Aliarcobacter butzleri (strain RM4018) (Arcobacter butzleri).